Reading from the N-terminus, the 665-residue chain is Methionine--tRNA ligase (665 aa).

The short motif at 12–22 (YYPSGKLHIGS) is the 'HIGH' region element. The short motif at 308-312 (KMSKS) is the 'KMSKS' region element. Position 311 (Lys311) interacts with ATP. The 104-residue stretch at 562-665 (TFDAVEIRVA…SSVPNGSIIG (104 aa)) folds into the tRNA-binding domain.

The protein belongs to the class-I aminoacyl-tRNA synthetase family. MetG type 2B subfamily. As to quaternary structure, homodimer.

The protein resides in the cytoplasm. It carries out the reaction tRNA(Met) + L-methionine + ATP = L-methionyl-tRNA(Met) + AMP + diphosphate. Its function is as follows. Is required not only for elongation of protein synthesis but also for the initiation of all mRNA translation through initiator tRNA(fMet) aminoacylation. This is Methionine--tRNA ligase (metG) from Streptococcus pyogenes serotype M3 (strain SSI-1).